Consider the following 176-residue polypeptide: Large ribosomal subunit protein uL10 (176 aa).

Belongs to the universal ribosomal protein uL10 family. Part of the ribosomal stalk of the 50S ribosomal subunit. The N-terminus interacts with L11 and the large rRNA to form the base of the stalk. The C-terminus forms an elongated spine to which L12 dimers bind in a sequential fashion forming a multimeric L10(L12)X complex.

In terms of biological role, forms part of the ribosomal stalk, playing a central role in the interaction of the ribosome with GTP-bound translation factors. This is Large ribosomal subunit protein uL10 from Mycobacteroides abscessus (strain ATCC 19977 / DSM 44196 / CCUG 20993 / CIP 104536 / JCM 13569 / NCTC 13031 / TMC 1543 / L948) (Mycobacterium abscessus).